Here is a 110-residue protein sequence, read N- to C-terminus: Large ribosomal subunit protein uL22 (110 aa).

The protein belongs to the universal ribosomal protein uL22 family. In terms of assembly, part of the 50S ribosomal subunit.

This protein binds specifically to 23S rRNA; its binding is stimulated by other ribosomal proteins, e.g. L4, L17, and L20. It is important during the early stages of 50S assembly. It makes multiple contacts with different domains of the 23S rRNA in the assembled 50S subunit and ribosome. Its function is as follows. The globular domain of the protein is located near the polypeptide exit tunnel on the outside of the subunit, while an extended beta-hairpin is found that lines the wall of the exit tunnel in the center of the 70S ribosome. The sequence is that of Large ribosomal subunit protein uL22 from Dichelobacter nodosus (strain VCS1703A).